Here is a 509-residue protein sequence, read N- to C-terminus: UDP-N-acetylmuramoyl-L-alanyl-D-glutamate--2,6-diaminopimelate ligase (509 aa).

Serine 30 contributes to the UDP-N-acetyl-alpha-D-muramoyl-L-alanyl-D-glutamate binding site. 110–116 serves as a coordination point for ATP; it reads GTNGKTT. UDP-N-acetyl-alpha-D-muramoyl-L-alanyl-D-glutamate contacts are provided by residues 152–153, serine 179, glutamine 185, and arginine 187; that span reads TT. The residue at position 219 (lysine 219) is an N6-carboxylysine. Residues arginine 385, 409–412, glycine 476, and glutamate 480 contribute to the meso-2,6-diaminopimelate site; that span reads DNPR. The Meso-diaminopimelate recognition motif signature appears at 409–412; it reads DNPR.

This sequence belongs to the MurCDEF family. MurE subfamily. Mg(2+) is required as a cofactor. In terms of processing, carboxylation is probably crucial for Mg(2+) binding and, consequently, for the gamma-phosphate positioning of ATP.

The protein localises to the cytoplasm. The catalysed reaction is UDP-N-acetyl-alpha-D-muramoyl-L-alanyl-D-glutamate + meso-2,6-diaminopimelate + ATP = UDP-N-acetyl-alpha-D-muramoyl-L-alanyl-gamma-D-glutamyl-meso-2,6-diaminopimelate + ADP + phosphate + H(+). It participates in cell wall biogenesis; peptidoglycan biosynthesis. Catalyzes the addition of meso-diaminopimelic acid to the nucleotide precursor UDP-N-acetylmuramoyl-L-alanyl-D-glutamate (UMAG) in the biosynthesis of bacterial cell-wall peptidoglycan. In Geobacter sulfurreducens (strain ATCC 51573 / DSM 12127 / PCA), this protein is UDP-N-acetylmuramoyl-L-alanyl-D-glutamate--2,6-diaminopimelate ligase.